Reading from the N-terminus, the 24-residue chain is Coenzyme PQQ synthesis protein A (24 aa).

Residues 16–20 (EVTMY) constitute a cross-link (pyrroloquinoline quinone (Glu-Tyr)).

The protein belongs to the PqqA family.

It participates in cofactor biosynthesis; pyrroloquinoline quinone biosynthesis. Its function is as follows. Required for coenzyme pyrroloquinoline quinone (PQQ) biosynthesis. PQQ is probably formed by cross-linking a specific glutamate to a specific tyrosine residue and excising these residues from the peptide. This chain is Coenzyme PQQ synthesis protein A, found in Methylococcus capsulatus (strain ATCC 33009 / NCIMB 11132 / Bath).